The primary structure comprises 206 residues: Oligoribonuclease (206 aa).

Residues 20-183 (LVWLDMEMTG…ADIHESIDEL (164 aa)) form the Exonuclease domain. The active site involves Tyr-141.

It belongs to the oligoribonuclease family.

It is found in the cytoplasm. In terms of biological role, 3'-to-5' exoribonuclease specific for small oligoribonucleotides. In Burkholderia lata (strain ATCC 17760 / DSM 23089 / LMG 22485 / NCIMB 9086 / R18194 / 383), this protein is Oligoribonuclease.